The following is a 259-amino-acid chain: Undecaprenyl-diphosphatase 4 (259 aa).

8 helical membrane passes run 1 to 21, 39 to 59, 71 to 91, 99 to 119, 133 to 153, 173 to 193, 208 to 228, and 239 to 259; these read MNWL…FLPI, AGLF…FIYY, FSKL…IGLL, ISKT…FLYV, ITYK…FPAI, AAYF…ILQF, SLIV…SWMI, and FAYY…TDVF.

It belongs to the UppP family.

It localises to the cell membrane. It catalyses the reaction di-trans,octa-cis-undecaprenyl diphosphate + H2O = di-trans,octa-cis-undecaprenyl phosphate + phosphate + H(+). In terms of biological role, catalyzes the dephosphorylation of undecaprenyl diphosphate (UPP). Confers resistance to bacitracin. This is Undecaprenyl-diphosphatase 4 from Bacillus thuringiensis subsp. konkukian (strain 97-27).